The chain runs to 206 residues: Small ribosomal subunit protein uS7 (206 aa).

Belongs to the universal ribosomal protein uS7 family. In terms of assembly, component of the small ribosomal subunit.

Its subcellular location is the cytoplasm. Component of the small ribosomal subunit. The ribosome is a large ribonucleoprotein complex responsible for the synthesis of proteins in the cell. The protein is Small ribosomal subunit protein uS7 of Entamoeba histolytica (strain ATCC 30459 / HM-1:IMSS / ABRM).